The sequence spans 385 residues: Acetylornithine aminotransferase (385 aa).

Residues 95–96 (GA) and F122 each bind pyridoxal 5'-phosphate. N(2)-acetyl-L-ornithine is bound at residue R125. 208 to 211 (DEIQ) serves as a coordination point for pyridoxal 5'-phosphate. The residue at position 237 (K237) is an N6-(pyridoxal phosphate)lysine. T265 serves as a coordination point for N(2)-acetyl-L-ornithine. T266 serves as a coordination point for pyridoxal 5'-phosphate.

The protein belongs to the class-III pyridoxal-phosphate-dependent aminotransferase family. ArgD subfamily. In terms of assembly, homodimer. It depends on pyridoxal 5'-phosphate as a cofactor.

The protein resides in the cytoplasm. It catalyses the reaction N(2)-acetyl-L-ornithine + 2-oxoglutarate = N-acetyl-L-glutamate 5-semialdehyde + L-glutamate. It functions in the pathway amino-acid biosynthesis; L-arginine biosynthesis; N(2)-acetyl-L-ornithine from L-glutamate: step 4/4. In Bacillus subtilis (strain 168), this protein is Acetylornithine aminotransferase.